A 243-amino-acid polypeptide reads, in one-letter code: NH(3)-dependent NAD(+) synthetase (243 aa).

Position 31 to 38 (31 to 38) interacts with ATP; sequence GLSGGVDS. Aspartate 37 is a Mg(2+) binding site. Arginine 116 provides a ligand contact to deamido-NAD(+). Threonine 136 is a binding site for ATP. A Mg(2+)-binding site is contributed by glutamate 141. Deamido-NAD(+) is bound by residues lysine 149 and aspartate 156. The ATP site is built by lysine 165 and serine 187. 233 to 234 provides a ligand contact to deamido-NAD(+); sequence HK.

This sequence belongs to the NAD synthetase family. In terms of assembly, homodimer.

The enzyme catalyses deamido-NAD(+) + NH4(+) + ATP = AMP + diphosphate + NAD(+) + H(+). The protein operates within cofactor biosynthesis; NAD(+) biosynthesis; NAD(+) from deamido-NAD(+) (ammonia route): step 1/1. In terms of biological role, catalyzes the ATP-dependent amidation of deamido-NAD to form NAD. Uses ammonia as a nitrogen source. This chain is NH(3)-dependent NAD(+) synthetase, found in Carboxydothermus hydrogenoformans (strain ATCC BAA-161 / DSM 6008 / Z-2901).